Reading from the N-terminus, the 346-residue chain is RNA-directed DNA methylation 4 (346 aa).

An N-acetylmethionine modification is found at Met-1. Composition is skewed to acidic residues over residues 253 to 268 (FCDGSDESDYDSEDSN), 278 to 312 (PEEEEEEEEEDDDDDDDDESEEEKSEASDESDDEE), and 323 to 332 (GDDEFDDYAE). Residues 253 to 346 (FCDGSDESDY…YSESDEEFES (94 aa)) are disordered.

The protein belongs to the IWR1/SLC7A6OS family. As to quaternary structure, interacts with NRPD1. Associates with Pol II and Pol V complexes.

Functionally, probable regulatory factor for several RNA polymerases. Effector involved in facilitation of Pol V transcription as RNA scaffold and recruitment of silencing complex to target genomic sites. This chain is RNA-directed DNA methylation 4 (RDM4), found in Arabidopsis thaliana (Mouse-ear cress).